The sequence spans 834 residues: Arf-GAP with coiled-coil, ANK repeat and PH domain-containing protein 3 (834 aa).

A PH domain is found at 268 to 363 (GVVMEGYLFK…WVQAVQASIA (96 aa)). Residues 375 to 400 (SERLDRTASPSTSSIDSATDTRERGV) are disordered. Over residues 382–392 (ASPSTSSIDSA) the composition is skewed to polar residues. The Arf-GAP domain maps to 403-525 (ESVLQRVQSV…KFLRKAPMAP (123 aa)). Residues 418-441 (CGDCGQPDPRWASINLGVLLCIEC) form a C4-type zinc finger. The interval 633–653 (SVTEEEGAESEESSGEADGDT) is disordered. The span at 634-653 (VTEEEGAESEESSGEADGDT) shows a compositional bias: acidic residues. ANK repeat units lie at residues 702–731 (EGKTPLVQAVLGGSLIVCEFLLQNGADVNQ), 735–764 (RGRAPLHHATLLGRTGQVCLFLKRGADQHA), and 768–797 (EQRDPLAIAVQAANADIVTLLRLARMAEEM).

Its function is as follows. GTPase-activating protein for the ADP ribosylation factor family. The chain is Arf-GAP with coiled-coil, ANK repeat and PH domain-containing protein 3 (ACAP3) from Homo sapiens (Human).